The sequence spans 256 residues: uncharacterized protein (256 aa).

This is an uncharacterized protein from Treponema pallidum (strain Nichols).